Here is a 382-residue protein sequence, read N- to C-terminus: Putative glutamate--cysteine ligase 2-1 (382 aa).

The protein belongs to the glutamate--cysteine ligase type 2 family. YbdK subfamily.

It carries out the reaction L-cysteine + L-glutamate + ATP = gamma-L-glutamyl-L-cysteine + ADP + phosphate + H(+). ATP-dependent carboxylate-amine ligase which exhibits weak glutamate--cysteine ligase activity. The sequence is that of Putative glutamate--cysteine ligase 2-1 from Frankia casuarinae (strain DSM 45818 / CECT 9043 / HFP020203 / CcI3).